Reading from the N-terminus, the 50-residue chain is Large ribosomal subunit protein bL33 (50 aa).

This sequence belongs to the bacterial ribosomal protein bL33 family.

This chain is Large ribosomal subunit protein bL33, found in Sulfurovum sp. (strain NBC37-1).